Consider the following 583-residue polypeptide: CTP synthase (583 aa).

The interval 1–278 is amidoligase domain; the sequence is MRRHPQTATK…DAFVVRRLNL (278 aa). CTP is bound at residue serine 20. Serine 20 contacts UTP. ATP is bound by residues 21–26 and aspartate 78; that span reads SLGKGL. 2 residues coordinate Mg(2+): aspartate 78 and glutamate 152. Residues 159–161, 199–204, and lysine 235 contribute to the CTP site; these read DIE and KTKPTQ. Residues 199–204 and lysine 235 contribute to the UTP site; that span reads KTKPTQ. The Glutamine amidotransferase type-1 domain maps to 303-551; sequence RIALVGKYVE…VKAAIDYKEG (249 aa). Glycine 366 contacts L-glutamine. Cysteine 393 (nucleophile; for glutamine hydrolysis) is an active-site residue. L-glutamine-binding positions include 394-397, glutamate 416, and arginine 477; that span reads LGLQ. Residues histidine 524 and glutamate 526 contribute to the active site. Positions 559-583 are disordered; the sequence is PERVSNGAERRDQVGQSIPEPANRG.

Belongs to the CTP synthase family. In terms of assembly, homotetramer.

The catalysed reaction is UTP + L-glutamine + ATP + H2O = CTP + L-glutamate + ADP + phosphate + 2 H(+). It catalyses the reaction L-glutamine + H2O = L-glutamate + NH4(+). The enzyme catalyses UTP + NH4(+) + ATP = CTP + ADP + phosphate + 2 H(+). Its pathway is pyrimidine metabolism; CTP biosynthesis via de novo pathway; CTP from UDP: step 2/2. With respect to regulation, allosterically activated by GTP, when glutamine is the substrate; GTP has no effect on the reaction when ammonia is the substrate. The allosteric effector GTP functions by stabilizing the protein conformation that binds the tetrahedral intermediate(s) formed during glutamine hydrolysis. Inhibited by the product CTP, via allosteric rather than competitive inhibition. Its function is as follows. Catalyzes the ATP-dependent amination of UTP to CTP with either L-glutamine or ammonia as the source of nitrogen. Regulates intracellular CTP levels through interactions with the four ribonucleotide triphosphates. The sequence is that of CTP synthase from Mycobacterium marinum (strain ATCC BAA-535 / M).